Reading from the N-terminus, the 263-residue chain is Putative TATA-binding protein pB263R (263 aa).

The protein belongs to the asfivirus B263R family.

Functionally, putative TATA-binding protein. This chain is Putative TATA-binding protein pB263R, found in African swine fever virus (isolate Tick/Malawi/Lil 20-1/1983) (ASFV).